The sequence spans 139 residues: Histone H2AX (139 aa).

A disordered region spans residues 1–24 (MSSTATTKGGRGKPKASKSVSRSS). S136 is modified (phosphoserine; by ATM and ATR). Residues 136-137 (SQ) carry the [ST]-Q motif motif.

Belongs to the histone H2A family. As to quaternary structure, the nucleosome is a histone octamer containing two molecules each of H2A, H2B, H3 and H4 assembled in one H3-H4 heterotetramer and two H2A-H2B heterodimers. The octamer wraps approximately 147 bp of DNA. Interacts with numerous proteins required for DNA damage signaling and repair when phosphorylated on Ser-136. Post-translationally, phosphorylated on Ser-136 (to form gamma-H2AX) in response to DNA double strand breaks (DSBs) generated by exogenous genotoxic agents and by stalled replication forks, and may also occur during meiotic recombination events. Phosphorylation can extend up to several thousand nucleosomes from the actual site of the DSB and may mark the surrounding chromatin for recruitment of proteins required for DNA damage signaling and repair. Widespread phosphorylation may also serve to amplify the damage signal or aid repair of persistent lesions. Phosphorylation of Ser-136 in response to ionizing radiation is mediated by ATM while defects in DNA replication induce Ser-136 phosphorylation subsequent to activation of ATR. Dephosphorylation of Ser-136 by PP2A is required for DNA DSB repair.

The protein localises to the nucleus. It localises to the chromosome. In terms of biological role, variant histone H2A which replaces conventional H2A in a subset of nucleosomes. Nucleosomes wrap and compact DNA into chromatin, limiting DNA accessibility to the cellular machineries which require DNA as a template. Histones thereby play a central role in transcription regulation, DNA repair, DNA replication and chromosomal stability. DNA accessibility is regulated via a complex set of post-translational modifications of histones, also called histone code, and nucleosome remodeling. Required for checkpoint-mediated arrest of cell cycle progression in response to low doses of ionizing radiation and for efficient repair of DNA double strand breaks (DSBs) specifically when modified by C-terminal phosphorylation. The polypeptide is Histone H2AX (HIS2A) (Cicer arietinum (Chickpea)).